Consider the following 364-residue polypeptide: Coproporphyrin III ferrochelatase (364 aa).

Fe-coproporphyrin III is bound by residues Arg-29 and Tyr-118. Residues His-169 and Glu-250 each coordinate Fe(2+).

It belongs to the ferrochelatase family.

Its subcellular location is the cytoplasm. It carries out the reaction Fe-coproporphyrin III + 2 H(+) = coproporphyrin III + Fe(2+). Its pathway is porphyrin-containing compound metabolism; protoheme biosynthesis. In terms of biological role, involved in coproporphyrin-dependent heme b biosynthesis. Catalyzes the insertion of ferrous iron into coproporphyrin III to form Fe-coproporphyrin III. This is Coproporphyrin III ferrochelatase from Streptococcus pneumoniae (strain ATCC 700669 / Spain 23F-1).